Reading from the N-terminus, the 201-residue chain is MSTETRVNERIRVPEVRLIGPGGEQVGIVRIEDALRVAADADLDLVEVAPNARPPVCKIMDYGKYKYEAAQKARESRRNQQQTVVKEQKLRPKIDDHDYETKKGHVVRFLEAGSKVKVTIMFRGREQSRPELGYRLLQRLGADVADYGFIETSAKQDGRNMTMVLAPHRGAKTRARARHPGEPAGGPPPKPTAGDSKAAPN.

The segment at 167 to 201 (PHRGAKTRARARHPGEPAGGPPPKPTAGDSKAAPN) is disordered. Positions 169 to 178 (RGAKTRARAR) are enriched in basic residues.

The protein belongs to the IF-3 family. As to quaternary structure, monomer.

It localises to the cytoplasm. In terms of biological role, IF-3 binds to the 30S ribosomal subunit and shifts the equilibrium between 70S ribosomes and their 50S and 30S subunits in favor of the free subunits, thus enhancing the availability of 30S subunits on which protein synthesis initiation begins. This Mycobacterium bovis (strain ATCC BAA-935 / AF2122/97) protein is Translation initiation factor IF-3.